Consider the following 382-residue polypeptide: Adenosine 3'-phospho 5'-phosphosulfate transporter 2 (382 aa).

Polar residues predominate over residues 1 to 10; it reads MSVSNRNGNG. A disordered region spans residues 1-33; it reads MSVSNRNGNGSEVIYVGDRSTNRPPRNAPSPDE. Transmembrane regions (helical) follow at residues 56 to 76, 83 to 103, 121 to 141, 144 to 164, 170 to 190, 197 to 217, 234 to 254, 271 to 291, 299 to 319, and 323 to 343; these read LCCA…ELIF, PYGW…GYVE, VLLA…LGYL, PTQV…SILI, GPLD…FTLA, NFNP…AAIG, VVIY…LLTG, FGYA…VLTL, LAAT…FVFF, and FTIN…LNVY.

Belongs to the nucleotide-sugar transporter family. SLC35B subfamily.

It is found in the golgi apparatus membrane. Functionally, mediates the transport of adenosine 3'-phospho 5'-phosphosulfate (PAPS), from cytosol into Golgi. PAPS is a universal sulfuryl donor for sulfation events that take place in the Golgi. Essential for viability. Involved in glycosaminoglycan synthesis and the subsequent signaling. May be involved in hh and dpp signaling by controlling the sulfation of heparan sulfate (HS). The sequence is that of Adenosine 3'-phospho 5'-phosphosulfate transporter 2 from Aedes aegypti (Yellowfever mosquito).